The primary structure comprises 262 residues: Adenosylcobinamide-GDP ribazoletransferase (262 aa).

A run of 8 helical transmembrane segments spans residues 4–21, 37–57, 62–82, 112–132, 141–161, 181–201, 202–222, and 236–256; these read AWSG…IPIR, AFPL…FIFS, LSPL…AGGL, VGAF…LFVF, IFLI…LLIY, YDAH…CAIH, FSVW…VFVA, and DALG…IWLL.

This sequence belongs to the CobS family. Mg(2+) is required as a cofactor.

It localises to the cell membrane. It carries out the reaction alpha-ribazole + adenosylcob(III)inamide-GDP = adenosylcob(III)alamin + GMP + H(+). The catalysed reaction is alpha-ribazole 5'-phosphate + adenosylcob(III)inamide-GDP = adenosylcob(III)alamin 5'-phosphate + GMP + H(+). It participates in cofactor biosynthesis; adenosylcobalamin biosynthesis; adenosylcobalamin from cob(II)yrinate a,c-diamide: step 7/7. Its function is as follows. Joins adenosylcobinamide-GDP and alpha-ribazole to generate adenosylcobalamin (Ado-cobalamin). Also synthesizes adenosylcobalamin 5'-phosphate from adenosylcobinamide-GDP and alpha-ribazole 5'-phosphate. This is Adenosylcobinamide-GDP ribazoletransferase from Geobacillus sp. (strain WCH70).